The chain runs to 92 residues: Progonadoliberin-1 (92 aa).

The signal sequence occupies residues 1 to 23 (MKPIQKLLAGLILLTWCVEGCSS). A Pyrrolidone carboxylic acid modification is found at Gln24. Gly33 is subject to Glycine amide.

This sequence belongs to the GnRH family. Post-translationally, the precursor is cleaved by ACE, which removes the Gly-Lys-Arg peptide at the C-terminus, leading to mature hormone. The mature form of Gonadoliberin-1 is also cleaved and degraded by ACE.

The protein localises to the secreted. Its function is as follows. Stimulates the secretion of gonadotropins; it stimulates the secretion of both luteinizing and follicle-stimulating hormones. This Homo sapiens (Human) protein is Progonadoliberin-1 (GNRH1).